We begin with the raw amino-acid sequence, 64 residues long: Bacteriocin glycocin F (64 aa).

A signal peptide spans 1 to 21 (MSKLVKTLTISEISKAQNNGG). 2 disulfides stabilise this stretch: Cys26–Cys49 and Cys33–Cys42. O-linked (GlcNAc) serine glycosylation occurs at Ser39. Cys64 carries an S-linked (GlcNAc) cysteine glycan.

The protein resides in the secreted. In terms of biological role, has antibacterial activity against L.plantarum ATCC 8014. In purified form, the activity is bacteriostatic (IC(50)=2 nM) rather than bactericidal. This chain is Bacteriocin glycocin F, found in Lactiplantibacillus plantarum (Lactobacillus plantarum).